The chain runs to 428 residues: 3-phosphoshikimate 1-carboxyvinyltransferase (428 aa).

3-phosphoshikimate-binding residues include Lys-22, Ser-23, and Arg-27. Position 22 (Lys-22) interacts with phosphoenolpyruvate. Gly-94 and Arg-122 together coordinate phosphoenolpyruvate. Ser-168, Ser-169, Gln-170, Ser-196, Asp-315, and Lys-342 together coordinate 3-phosphoshikimate. Phosphoenolpyruvate is bound at residue Gln-170. The active-site Proton acceptor is the Asp-315. Residues Arg-346, Arg-389, and Lys-414 each contribute to the phosphoenolpyruvate site.

This sequence belongs to the EPSP synthase family. In terms of assembly, monomer.

It localises to the cytoplasm. The catalysed reaction is 3-phosphoshikimate + phosphoenolpyruvate = 5-O-(1-carboxyvinyl)-3-phosphoshikimate + phosphate. It functions in the pathway metabolic intermediate biosynthesis; chorismate biosynthesis; chorismate from D-erythrose 4-phosphate and phosphoenolpyruvate: step 6/7. Its function is as follows. Catalyzes the transfer of the enolpyruvyl moiety of phosphoenolpyruvate (PEP) to the 5-hydroxyl of shikimate-3-phosphate (S3P) to produce enolpyruvyl shikimate-3-phosphate and inorganic phosphate. This is 3-phosphoshikimate 1-carboxyvinyltransferase from Thiobacillus denitrificans (strain ATCC 25259 / T1).